A 60-amino-acid chain; its full sequence is Cytotoxin 5 (60 aa).

4 disulfide bridges follow: Cys-3–Cys-21, Cys-14–Cys-38, Cys-42–Cys-53, and Cys-54–Cys-59.

Belongs to the three-finger toxin family. Short-chain subfamily. Type IA cytotoxin sub-subfamily. Monomer in solution; Homodimer and oligomer in the presence of negatively charged lipids forming a pore with a size ranging between 20 and 30 Angstroms. As to expression, expressed by the venom gland.

The protein resides in the secreted. Its subcellular location is the target cell membrane. Functionally, basic protein that binds to cell membrane and depolarizes cardiomyocytes. It also possesses lytic activity on many other cells, including red blood cells. Interaction with sulfatides in the cell membrane induces pore formation and cell internalization and is responsible for cytotoxicity in cardiomyocytes. It targets the mitochondrial membrane and induces mitochondrial swelling and fragmentation. Inhibits protein kinases C. It binds to the integrin alpha-V/beta-3 with a moderate affinity. Is cardiotoxic and cytocidal to Yoshida sarcoma cells. In Naja atra (Chinese cobra), this protein is Cytotoxin 5.